The chain runs to 382 residues: UDP-4-amino-4-deoxy-L-arabinose--oxoglutarate aminotransferase (382 aa).

K182 carries the post-translational modification N6-(pyridoxal phosphate)lysine.

The protein belongs to the DegT/DnrJ/EryC1 family. ArnB subfamily. Homodimer. Pyridoxal 5'-phosphate is required as a cofactor.

The enzyme catalyses UDP-4-amino-4-deoxy-beta-L-arabinose + 2-oxoglutarate = UDP-beta-L-threo-pentopyranos-4-ulose + L-glutamate. It functions in the pathway nucleotide-sugar biosynthesis; UDP-4-deoxy-4-formamido-beta-L-arabinose biosynthesis; UDP-4-deoxy-4-formamido-beta-L-arabinose from UDP-alpha-D-glucuronate: step 2/3. It participates in bacterial outer membrane biogenesis; lipopolysaccharide biosynthesis. Catalyzes the conversion of UDP-4-keto-arabinose (UDP-Ara4O) to UDP-4-amino-4-deoxy-L-arabinose (UDP-L-Ara4N). The modified arabinose is attached to lipid A and is required for resistance to polymyxin and cationic antimicrobial peptides. This Pectobacterium atrosepticum (strain SCRI 1043 / ATCC BAA-672) (Erwinia carotovora subsp. atroseptica) protein is UDP-4-amino-4-deoxy-L-arabinose--oxoglutarate aminotransferase.